The chain runs to 61 residues: Early 3 Conserved Region 1-alpha protein (61 aa).

The Lumenal portion of the chain corresponds to 1-14 (MSNSSNSTSLSNFS). N-linked (GlcNAc...) asparagine; by host glycosylation is found at Asn-3, Asn-6, and Asn-12. A helical membrane pass occupies residues 15–35 (GIGVGVILTLVILFILILALL). Topologically, residues 36 to 61 (CLRVAACCTHVCTYCQLFKRWGQHPR) are cytoplasmic.

The protein belongs to the adenoviridae E3-CR1 family. As to quaternary structure, interacts with E3 RID alpha and E3 RID beta. In terms of processing, only 1 of 3 three potential glycosylation sites is glycosylated. Oligosaccharides are not processed from high mannose to the complex type because the protein is retained in the endoplasmic reticulum.

It is found in the host endoplasmic reticulum membrane. Its subcellular location is the host cell membrane. Its function is as follows. Prevents infected cell apoptosis induced by the host immune system. May act by down-regulating host TRAIL receptors. May act in complex with E3 RID alpha and beta. May play a role on cellular apoptosis regulation in the ER. In Human adenovirus C serotype 2 (HAdV-2), this protein is Early 3 Conserved Region 1-alpha protein.